We begin with the raw amino-acid sequence, 165 residues long: Cytochrome b6-f complex subunit 4 (165 aa).

The next 3 membrane-spanning stretches (helical) occupy residues 36-56, 95-115, and 131-151; these read LLYIFPVVILGTIACNVGLAV, LLGVLLMVSVPAGLLTVPFLE, and TVFLIGTVVALWLGIGATLPI.

The protein belongs to the cytochrome b family. PetD subfamily. As to quaternary structure, the 4 large subunits of the cytochrome b6-f complex are cytochrome b6, subunit IV (17 kDa polypeptide, petD), cytochrome f and the Rieske protein, while the 4 small subunits are petG, petL, petM and petN. The complex functions as a dimer.

The protein resides in the plastid. The protein localises to the chloroplast thylakoid membrane. Functionally, component of the cytochrome b6-f complex, which mediates electron transfer between photosystem II (PSII) and photosystem I (PSI), cyclic electron flow around PSI, and state transitions. This is Cytochrome b6-f complex subunit 4 from Populus alba (White poplar).